The primary structure comprises 99 residues: Cyclin-dependent protein kinase inhibitor SMR7 (99 aa).

A disordered region spans residues 49–70 (ICITPTARGAKTPECPAAPRKR).

As to expression, expressed in root meristems after induction.

Probable cyclin-dependent protein kinase (CDK) inhibitor that functions as a repressor of mitosis in the endoreduplication cell cycle. Acts as a potent cell cycle inhibitor, regulating a hydroxyurea-dependent checkpoint in leaves. This chain is Cyclin-dependent protein kinase inhibitor SMR7, found in Arabidopsis thaliana (Mouse-ear cress).